Here is a 1265-residue protein sequence, read N- to C-terminus: Shugoshin 2 (1265 aa).

A coiled-coil region spans residues 69–116 (KENSRRITTEKMLLQKEVEKLNFENTFLRLKLNNLNKKLIDIEALMNN). Disordered regions lie at residues 161 to 202 (LTSN…STQD), 230 to 287 (DVPP…NLSA), 305 to 339 (LNCNNEINGHTNETNTEMQRNKQDLPGLSSESARE), and 381 to 447 (GIKK…GAED). The span at 190 to 202 (SSGSTTQPLSTQD) shows a compositional bias: polar residues. Residues 232 to 242 (PPRESHSHSDQ) are compositionally biased toward basic and acidic residues. Positions 305-322 (LNCNNEINGHTNETNTEM) are enriched in polar residues. Composition is skewed to basic and acidic residues over residues 389–410 (KTNEHGMKTFRKVKDSSSEKKR) and 425–446 (IGEKIENRTERSDVLDGKRGAE). Positions 452-476 (FNNEQLAQMNEQLAQVNELKKMTLQ) form a coiled coil. Residues 499–526 (EQEETYSLSQSSGKFHQESKFDKGQNSL) form a disordered region. A compositionally biased stretch (polar residues) spans 503-512 (TYSLSQSSGK). A coiled-coil region spans residues 603-626 (EQNESNINKLRKKVNRKTEIISGM). The span at 1073-1083 (NKMTSKSKKRK) shows a compositional bias: basic residues. The interval 1073 to 1093 (NKMTSKSKKRKTSIDPSPESH) is disordered. S1144 is modified (phosphoserine). The tract at residues 1200-1265 (KVNRRTQKSG…EPSLRDKMRR (66 aa)) is disordered. Over residues 1217-1230 (DLSNTSFVSNNTAE) the composition is skewed to polar residues. Residues 1231–1243 (SENKSEDLSSERT) show a composition bias toward basic and acidic residues.

The protein belongs to the shugoshin family. In terms of assembly, part of an astrin (SPAG5) -kinastrin (SKAP) complex containing KNSTRN, SPAG5, PLK1, DYNLL1 and SGO2. Interacts with CDCA8. Directly interacts with PPP2CA.

The protein localises to the nucleus. It localises to the chromosome. The protein resides in the centromere. It is found in the kinetochore. Its function is as follows. Cooperates with PPP2CA to protect centromeric cohesin from separase-mediated cleavage in oocytes specifically during meiosis I. Has a crucial role in protecting REC8 at centromeres from cleavage by separase. During meiosis, protects centromeric cohesion complexes until metaphase II/anaphase II transition, preventing premature release of meiosis-specific REC8 cohesin complexes from anaphase I centromeres. Is thus essential for an accurate gametogenesis. May act by targeting PPP2CA to centromeres, thus leading to cohesin dephosphorylation. Essential for recruiting KIF2C to the inner centromere and for correcting defective kinetochore attachments. Involved in centromeric enrichment of AUKRB in prometaphase. This is Shugoshin 2 from Homo sapiens (Human).